Reading from the N-terminus, the 295-residue chain is Replication-associated protein A (295 aa).

The 103-residue stretch at 12–114 folds into the CRESS-DNA virus Rep endonuclease domain; that stretch reads RLQTKYVFLT…DGNVITKGEF (103 aa). The short motif at 19–22 is the RCR-1 element; it reads FLTY. 3 residues coordinate a divalent metal cation: Glu53, His61, and His63. Residues 61–63 carry the RCR-2 motif; it reads HLH. Tyr101 functions as the For DNA cleavage activity in the catalytic mechanism. Positions 101-104 match the RCR-3 motif; the sequence is YISK. Asp105 contributes to the a divalent metal cation binding site. The interval 163-175 is oligomerization; that stretch reads SANKLFPPQPEIY. The LXCXE motif, interaction with host RBR1 motif lies at 184-188; it reads LQCHE. Residues 232-295 are disordered; sequence EGLEPGSPPS…PSNSSHSGSN (64 aa). Low complexity predominate over residues 267 to 295; sequence PSTSLSMMTTRPTTSSTTSPSNSSHSGSN.

This sequence belongs to the geminiviridae Rep protein family. In terms of assembly, homooligomer. Interacts (via LXCXE domain) with host retinoblastoma-related protein 1 (RBR1), and may thereby deregulate the host cell cycle. Part of the C- and V-complexes which are RepA-Rep-DNA complexes involved in the c-sense and v-sense transcription. Mg(2+) is required as a cofactor. The cofactor is Mn(2+).

Its subcellular location is the host nucleus. It localises to the host cytoplasm. Its function is as follows. Implicated in enhancement of V-sense gene expression. Acts a an inhibitor of C-sense gene transcription. This Datura stramonium (Jimsonweed) protein is Replication-associated protein A.